We begin with the raw amino-acid sequence, 624 residues long: MGDPLLPGSTGLGSGSATAATGGSVTAGSGLGNGGTGGAERPPSPARLTHTSEKHPKVTLTELNMLRRHRELCDVVLNVGGRKIFAHRVILSACSSYFCAMFTGELEESRQTEVTIRDIDENAMELLIDFCYTAHIIVEESNVQTLLPAACLLQLVEIQDICCEFLKRQLDPTNCLGIRAFADTHSCRELLRIADKFTQHNFQEVMESEEFLLLPVGQLVDIICSDELNVRSEEQVFNAVMSWLKYNVADRRQHLAQVLQHVRLPLLSPKFLVGTVGSDLLVRSDEACRDLVDEAKNYLLLPQERPLMQGPRTRPRKPTRRGEVLFAVGGWCSGDAIASVERFDPQTNDWKMVAPMSKRRCGVGVAVLNDLLYAVGGHDGQSYLNSIERYDPQTNQWSCDVAPTTSCRTSVGVAVLDGFLYAVGGQDGVQCLNHVERYDPKENKWSKVAPMTTRRLGVAVAVLSGHLYAIGGSDGQCPLNTVERYDPRQNKWVAVNPMSTRRKHLGCAVFNNYIYAVGGRDDCMELSSAERYNPLTNTWSPIVAMTSRRSGVGLAVVNGQLYAVGGFDGSAYLKTIEVYDPETNQWRLCGCMNYRRLGGGVGVMRAPQTENYMWCDNSFRQHNL.

The tract at residues Met-1–His-55 is disordered. Low complexity predominate over residues Gly-15–Gly-28. Residues Ser-29–Gly-38 are compositionally biased toward gly residues. In terms of domain architecture, BTB spans Cys-73 to Glu-140. A BACK domain is found at Cys-175–Gly-277. Kelch repeat units follow at residues Val-324–Asp-370, Leu-372–Gly-418, Phe-419–Gly-465, Leu-467–Asn-512, Ile-514–Gly-559, and Gln-560–Ala-606.

The protein operates within protein modification; protein ubiquitination. Probable substrate-specific adapter of an E3 ubiquitin-protein ligase complex which mediates the ubiquitination and subsequent proteasomal degradation of target proteins. May have a role in synapse differentiation and growth. This Drosophila grimshawi (Hawaiian fruit fly) protein is Kelch-like protein diablo.